Here is a 254-residue protein sequence, read N- to C-terminus: Triosephosphate isomerase (254 aa).

10–12 contributes to the substrate binding site; sequence NWK. His99 serves as the catalytic Electrophile. The active-site Proton acceptor is Glu169. Substrate is bound by residues Gly175, Ser215, and 236 to 237; that span reads GG.

Belongs to the triosephosphate isomerase family. Homodimer.

It localises to the cytoplasm. The enzyme catalyses D-glyceraldehyde 3-phosphate = dihydroxyacetone phosphate. The protein operates within carbohydrate biosynthesis; gluconeogenesis. Its pathway is carbohydrate degradation; glycolysis; D-glyceraldehyde 3-phosphate from glycerone phosphate: step 1/1. Its function is as follows. Involved in the gluconeogenesis. Catalyzes stereospecifically the conversion of dihydroxyacetone phosphate (DHAP) to D-glyceraldehyde-3-phosphate (G3P). The sequence is that of Triosephosphate isomerase from Chlamydia abortus (strain DSM 27085 / S26/3) (Chlamydophila abortus).